We begin with the raw amino-acid sequence, 177 residues long: Large ribosomal subunit protein uL10 (177 aa).

It belongs to the universal ribosomal protein uL10 family. Part of the ribosomal stalk of the 50S ribosomal subunit. The N-terminus interacts with L11 and the large rRNA to form the base of the stalk. The C-terminus forms an elongated spine to which L12 dimers bind in a sequential fashion forming a multimeric L10(L12)X complex.

In terms of biological role, forms part of the ribosomal stalk, playing a central role in the interaction of the ribosome with GTP-bound translation factors. This is Large ribosomal subunit protein uL10 from Xanthomonas campestris pv. campestris (strain 8004).